Consider the following 206-residue polypeptide: Transmembrane emp24 domain-containing protein bai (206 aa).

Residues 1-20 (MARTLLILCTLMAWAWTGEA) form the signal peptide. Residues 21-172 (VMFKLTPNTQ…RDTNEKTNSR (152 aa)) lie on the Lumenal side of the membrane. The GOLD domain occupies 30–140 (QKCLKEDIQA…LKPLEVDLKR (111 aa)). Residues 173 to 193 (VLFFSIFSMCCLLGLATWQVL) traverse the membrane as a helical segment. Topologically, residues 194–206 (YLRRYFKAKKLIE) are cytoplasmic.

It belongs to the EMP24/GP25L family.

The protein resides in the membrane. In terms of biological role, eca and bai are essential, though not redundant, for dorsoventral patterning of the embryo. Specifically required during early embryogenesis for the activity of maternal tkv, while the zygotic tkv is not affected. The protein is Transmembrane emp24 domain-containing protein bai of Drosophila ananassae (Fruit fly).